A 419-amino-acid chain; its full sequence is Delta(8)-fatty-acid desaturase (419 aa).

One can recognise a Cytochrome b5 heme-binding domain in the interval 1–64; that stretch reads MKSKRQALSP…LKRMPKINPS (64 aa). His-24 and His-47 together coordinate heme. A helical transmembrane segment spans residues 110 to 130; that stretch reads LGVLGYFLMVQYQMYFIGAVL. The Histidine box-1 signature appears at 143–147; the sequence is HDICH. A helical transmembrane segment spans residues 156–176; that stretch reads WNNLVGLVFGNGLQGFSVTCW. A Histidine box-2 motif is present at residues 180–184; it reads HNAHH. Helical transmembrane passes span 226–246, 266–286, and 290–310; these read YFLVICILLRFIWCFQCVLTV, IGLALHWTLKALFHLFFMPSI, and LLVFFVSELVGGFGIAIVVFM. A Histidine box-3 motif is present at residues 355 to 359; it reads QIEHH.

It belongs to the fatty acid desaturase type 1 family. The cofactor is Fe cation.

It localises to the membrane. The enzyme catalyses an (11Z,14Z)-icosadienoyl-containing glycerolipid + 2 Fe(II)-[cytochrome b5] + O2 + 2 H(+) = an (8Z,11Z,14Z)-icosatrienoyl-containing glycerolipid + 2 Fe(III)-[cytochrome b5] + 2 H2O. The catalysed reaction is an (11Z,14Z,17Z)-icosatrienoyl-containing glycerolipid + 2 Fe(II)-[cytochrome b5] + O2 + 2 H(+) = an (8Z,11Z,14Z,17Z)-eicosatetraenoyl-containing glycerolipid + 2 Fe(III)-[cytochrome b5] + 2 H2O. It catalyses the reaction an (11Z)-eicosenoyl-containing glycerolipid + 2 Fe(II)-[cytochrome b5] + O2 + 2 H(+) = a (8Z,11Z)-eicosadienoyl-containing glycerolipid + 2 Fe(III)-[cytochrome b5] + 2 H2O. It participates in lipid metabolism; fatty acid metabolism. In terms of biological role, delta(8)-fatty-acid desaturase which introduces a double bond at the 8-position in 20-carbon chain length fatty acids (C20) that have an existing delta-11 unsaturation (double bond). Whether it acts on CoA-linked substrates (as in animals) or phospholipid-linked substrates (as in plants and fungi) is still not clear. The sequence is that of Delta(8)-fatty-acid desaturase (efd1) from Euglena gracilis.